Here is a 737-residue protein sequence, read N- to C-terminus: Phosphoribosylformylglycinamidine synthase subunit PurL (737 aa).

The active site involves H50. Y53 and K92 together coordinate ATP. E94 lines the Mg(2+) pocket. Residues 95–98 (SHNH) and R117 contribute to the substrate site. Residue H96 is the Proton acceptor of the active site. D118 is a Mg(2+) binding site. A substrate-binding site is contributed by Q241. D269 lines the Mg(2+) pocket. Substrate is bound at residue 313–315 (ESQ). Residues D494 and G531 each contribute to the ATP site. Residue N532 participates in Mg(2+) binding. S534 is a binding site for substrate.

It belongs to the FGAMS family. As to quaternary structure, monomer. Part of the FGAM synthase complex composed of 1 PurL, 1 PurQ and 2 PurS subunits.

It localises to the cytoplasm. It catalyses the reaction N(2)-formyl-N(1)-(5-phospho-beta-D-ribosyl)glycinamide + L-glutamine + ATP + H2O = 2-formamido-N(1)-(5-O-phospho-beta-D-ribosyl)acetamidine + L-glutamate + ADP + phosphate + H(+). It participates in purine metabolism; IMP biosynthesis via de novo pathway; 5-amino-1-(5-phospho-D-ribosyl)imidazole from N(2)-formyl-N(1)-(5-phospho-D-ribosyl)glycinamide: step 1/2. Part of the phosphoribosylformylglycinamidine synthase complex involved in the purines biosynthetic pathway. Catalyzes the ATP-dependent conversion of formylglycinamide ribonucleotide (FGAR) and glutamine to yield formylglycinamidine ribonucleotide (FGAM) and glutamate. The FGAM synthase complex is composed of three subunits. PurQ produces an ammonia molecule by converting glutamine to glutamate. PurL transfers the ammonia molecule to FGAR to form FGAM in an ATP-dependent manner. PurS interacts with PurQ and PurL and is thought to assist in the transfer of the ammonia molecule from PurQ to PurL. In Nitrobacter winogradskyi (strain ATCC 25391 / DSM 10237 / CIP 104748 / NCIMB 11846 / Nb-255), this protein is Phosphoribosylformylglycinamidine synthase subunit PurL.